A 215-amino-acid polypeptide reads, in one-letter code: Negative modulator of initiation of replication (215 aa).

Residues 71–93 (AETPKPSSEQEIRTPARKQSTQS) form a disordered region. Residues 181-187 (NTNSGRK) form an interaction with DNA region.

Belongs to the SeqA family. Homodimer. Polymerizes to form helical filaments.

It is found in the cytoplasm. In terms of biological role, negative regulator of replication initiation, which contributes to regulation of DNA replication and ensures that replication initiation occurs exactly once per chromosome per cell cycle. Binds to pairs of hemimethylated GATC sequences in the oriC region, thus preventing assembly of replication proteins and re-initiation at newly replicated origins. Repression is relieved when the region becomes fully methylated. The protein is Negative modulator of initiation of replication of Mannheimia succiniciproducens (strain KCTC 0769BP / MBEL55E).